The primary structure comprises 355 residues: DNA polymerase IV (355 aa).

Residues 7–188 (IIHIDMDCFY…LPVRKLFGVG (182 aa)) enclose the UmuC domain. Residues Asp11 and Asp106 each coordinate Mg(2+). The active site involves Glu107.

Belongs to the DNA polymerase type-Y family. As to quaternary structure, monomer. The cofactor is Mg(2+).

It localises to the cytoplasm. It carries out the reaction DNA(n) + a 2'-deoxyribonucleoside 5'-triphosphate = DNA(n+1) + diphosphate. In terms of biological role, poorly processive, error-prone DNA polymerase involved in untargeted mutagenesis. Copies undamaged DNA at stalled replication forks, which arise in vivo from mismatched or misaligned primer ends. These misaligned primers can be extended by PolIV. Exhibits no 3'-5' exonuclease (proofreading) activity. May be involved in translesional synthesis, in conjunction with the beta clamp from PolIII. The sequence is that of DNA polymerase IV from Legionella pneumophila (strain Corby).